The sequence spans 283 residues: Formamidopyrimidine-DNA glycosylase (283 aa).

The active-site Schiff-base intermediate with DNA is P2. The active-site Proton donor is the E3. K58 acts as the Proton donor; for beta-elimination activity in catalysis. DNA contacts are provided by H100, R119, and R162. An FPG-type zinc finger spans residues 247–283 (RVYGREGQPCVTPGCRGLVGRIVQSGRSSFHCPECQR). The Proton donor; for delta-elimination activity role is filled by R273.

The protein belongs to the FPG family. Monomer. Zn(2+) is required as a cofactor.

It catalyses the reaction Hydrolysis of DNA containing ring-opened 7-methylguanine residues, releasing 2,6-diamino-4-hydroxy-5-(N-methyl)formamidopyrimidine.. The enzyme catalyses 2'-deoxyribonucleotide-(2'-deoxyribose 5'-phosphate)-2'-deoxyribonucleotide-DNA = a 3'-end 2'-deoxyribonucleotide-(2,3-dehydro-2,3-deoxyribose 5'-phosphate)-DNA + a 5'-end 5'-phospho-2'-deoxyribonucleoside-DNA + H(+). In terms of biological role, involved in base excision repair of DNA damaged by oxidation or by mutagenic agents. Acts as a DNA glycosylase that recognizes and removes damaged bases. Has a preference for oxidized purines, such as 7,8-dihydro-8-oxoguanine (8-oxoG). Has AP (apurinic/apyrimidinic) lyase activity and introduces nicks in the DNA strand. Cleaves the DNA backbone by beta-delta elimination to generate a single-strand break at the site of the removed base with both 3'- and 5'-phosphates. The protein is Formamidopyrimidine-DNA glycosylase of Cereibacter sphaeroides (strain ATCC 17025 / ATH 2.4.3) (Rhodobacter sphaeroides).